Here is a 552-residue protein sequence, read N- to C-terminus: MPLEKTNTHDSTATVEDQEATDNPMHLTQSRMLDLAGNPNRTTSRQSETLFPNGVDLNYPFTTTRGPPDVAEYNLETAEGVYRDPTINEGEEELVTWELNDPENPHNWSRLWKWYITIVNSLLVVCSAFGSSVIAGDLEDVSRDLKVGPEVANLSCSLMVVGFGIGPLVISPLSEMIGRRIVYLVTLMIYIVLQIPCALAPNIACLLIVRFFCGCFGCTPLTLAGGVISDVWETRERGLAIAFFAAGPYAGPTLGPLVGGWIGVGTGDFRWIFWVNMIYMFVMYLTLLPVPETYAPVLLRWRAQRIRKETGRQVFTAQEKQMLSFKEIVQVNLTRPLTLLLTEPILVCISGYIALIYALLYGYFFAYPNVFVKGKGYNEGITGLMFIPILVGVVGALSTTPFLEKQYMAKLDANNGKSVPEWRLVGMCIASPFIPTGLLIFAWTSFPRLIWIGPAFSGAPFGYGMVLFYFSANNYLIDVYQNYCASALAAKTMVRSAGGAAFPLFIDYMMDGMTRQWAFFLLGMVAVAAIPIPFTFYLFGDKIRARSKAAIV.

Residues 1 to 59 (MPLEKTNTHDSTATVEDQEATDNPMHLTQSRMLDLAGNPNRTTSRQSETLFPNGVDLNY) are disordered. Positions 39–50 (PNRTTSRQSETL) are enriched in polar residues. The next 12 membrane-spanning stretches (helical) occupy residues 116–136 (ITIV…VIAG), 158–178 (LMVV…EMIG), 181–201 (IVYL…ALAP), 203–223 (IACL…PLTL), 238–258 (GLAI…GPLV), 271–291 (WIFW…LPVP), 345–365 (ILVC…GYFF), 383–403 (GLMF…TPFL), 424–444 (LVGM…FAWT), 450–470 (IWIG…LFYF), 484–506 (CASA…PLFI), and 519–539 (FFLL…FYLF).

Belongs to the major facilitator superfamily.

It localises to the membrane. This is an uncharacterized protein from Schizosaccharomyces pombe (strain 972 / ATCC 24843) (Fission yeast).